A 572-amino-acid polypeptide reads, in one-letter code: MSMIGTKSFFISSSPKVPVGISWGPSSYRTNSSLSVRSPTLTCSISTISQPTRKEPATTKPEIMEELHEGTRKELLTSSSPIATMKLIDSIQRLGVGYYFEEEINTLLDRFLDLETTEDLLATALRFRLLRDNCFPAHSDVFGKFMNKDGKFKESLRKDVWGLLSLYEASYLGTKDEVELVEAMEFTKTCLEEQSIPLMAHKLSRHVSQALDLPRHLRMPRLEARNYIHEYSLESNNSPPLLELAKLEFNAVQSLHQKELIEIVRWWKQLGLVDKLGFARDRPLECYLWTVGIFPEPYNSTCRIELTKTIAILLVIDDIFDTYGSLPDLILFTEAVRRWDLNAMESLPEYMKICYMALYNTTNDIGFMILKRHGLSIVPHLKRTWIDMFEAFLTEAKWFNSGYVPTLEEYLDNGVTTGGTYMALVHSFFLMGQGVNKETVTMMEPYPDLFSLSGRILRLWDDLGTAREEQERGDVACSIECLMREKRISCDDEGRKQVRQLIRSLWTELNGELIAPSAMPLSIINASLNLARTAQVVYQHGDDKKGSSVDNQVQALIYIPISFPKRRDLKLL.

Positions 317, 321, and 469 each coordinate Mg(2+). The short motif at D317–D321 is the DDXXD motif element.

The protein belongs to the terpene synthase family. Requires Mg(2+) as cofactor.

In terms of biological role, probable sesquiterpene synthase. The protein is Probable terpene synthase 11 (TPS11) of Ricinus communis (Castor bean).